We begin with the raw amino-acid sequence, 162 residues long: Large ribosomal subunit protein uL15 (162 aa).

Over residues M1–R13 the composition is skewed to basic and acidic residues. A disordered region spans residues M1–K39. Residues R21–V35 are compositionally biased toward gly residues.

It belongs to the universal ribosomal protein uL15 family. Part of the 50S ribosomal subunit.

Its function is as follows. Binds to the 23S rRNA. This Gluconobacter oxydans (strain 621H) (Gluconobacter suboxydans) protein is Large ribosomal subunit protein uL15.